Reading from the N-terminus, the 237-residue chain is Orotidine 5'-phosphate decarboxylase (237 aa).

Residues Asp17, Lys39, 66–75 (DLKLHDIGNT), Thr121, Arg182, Gln191, Gly211, and Arg212 contribute to the substrate site. Lys68 (proton donor) is an active-site residue.

It belongs to the OMP decarboxylase family. Type 1 subfamily. Homodimer.

The enzyme catalyses orotidine 5'-phosphate + H(+) = UMP + CO2. It functions in the pathway pyrimidine metabolism; UMP biosynthesis via de novo pathway; UMP from orotate: step 2/2. In terms of biological role, catalyzes the decarboxylation of orotidine 5'-monophosphate (OMP) to uridine 5'-monophosphate (UMP). The chain is Orotidine 5'-phosphate decarboxylase from Rhodopseudomonas palustris (strain TIE-1).